The following is a 365-amino-acid chain: MPDSPTLHHNHIIGLENGSLTSNNNHQGMASVSVGQFQYPIWSWLNSLADATFGKRPSSFEFIVNKTRFSSAPVVATIIISYYLLILVGGRIMRNRQPIRLQKIFQYYNLTFSIASAILALLIFEQVAPAIYKHGFFFSICNEKAWTQPLVFLYYCAYISKFLELTDTFFLVLRKKPLQFLHCYHHGATAVLVYTQIVGRTSISWLIIEINLLVHVTMYYYYYLVAKGIRVPWKKWVTRFQIVQFFADLGFIYFAVYTEVAYRLKFYKACMGHCSGHPLAAFCGLATISSYLVLFIVFYHNTYKKNAALKMKAKAAAATKGNSSESSKNADLKRLSKSNASIAEVKCNNIVTNLYPISSGLNNEK.

Residues 1 to 68 (MPDSPTLHHN…SFEFIVNKTR (68 aa)) lie on the Lumenal side of the membrane. Asn17 and Asn65 each carry an N-linked (GlcNAc...) asparagine glycan. The helical transmembrane segment at 69–89 (FSSAPVVATIIISYYLLILVG) threads the bilayer. The Cytoplasmic portion of the chain corresponds to 90–111 (GRIMRNRQPIRLQKIFQYYNLT). The helical transmembrane segment at 112-132 (FSIASAILALLIFEQVAPAIY) threads the bilayer. Residues 133-149 (KHGFFFSICNEKAWTQP) lie on the Lumenal side of the membrane. Residues 150 to 170 (LVFLYYCAYISKFLELTDTFF) form a helical membrane-spanning segment. Topologically, residues 171–179 (LVLRKKPLQ) are cytoplasmic. Residues 180–198 (FLHCYHHGATAVLVYTQIV) form a helical membrane-spanning segment. Over 199-204 (GRTSIS) the chain is Lumenal. The helical transmembrane segment at 205 to 225 (WLIIEINLLVHVTMYYYYYLV) threads the bilayer. Residues 226–241 (AKGIRVPWKKWVTRFQ) lie on the Cytoplasmic side of the membrane. A helical transmembrane segment spans residues 242 to 262 (IVQFFADLGFIYFAVYTEVAY). Topologically, residues 263-278 (RLKFYKACMGHCSGHP) are lumenal. Residues 279–299 (LAAFCGLATISSYLVLFIVFY) form a helical membrane-spanning segment. Over 300 to 365 (HNTYKKNAAL…PISSGLNNEK (66 aa)) the chain is Cytoplasmic.

It belongs to the ELO family.

The protein resides in the endoplasmic reticulum membrane. The catalysed reaction is a very-long-chain acyl-CoA + malonyl-CoA + H(+) = a very-long-chain 3-oxoacyl-CoA + CO2 + CoA. In terms of biological role, may be involved in the synthesis of very long chain fatty acids. The sequence is that of Putative fatty acid elongase 2 from Schizosaccharomyces pombe (strain 972 / ATCC 24843) (Fission yeast).